A 468-amino-acid polypeptide reads, in one-letter code: Protein ABHD15 (468 aa).

Positions methionine 1–proline 23 are cleaved as a signal peptide. The interval valine 33–aspartate 61 is disordered. Residues aspartate 360 and histidine 391 each act as charge relay system in the active site. At serine 434 the chain carries Phosphoserine.

Belongs to the AB hydrolase superfamily. AB hydrolase 4 family. Interacts with PDE3B; this interaction regulates PDE3B's stability and expression and, thereby, impacts the antilipolytic action of insulin.

Its subcellular location is the secreted. In terms of biological role, may regulate adipocyte lipolysis and liver lipid accumulation. The chain is Protein ABHD15 from Homo sapiens (Human).